The chain runs to 232 residues: 2,3,4,5-tetrahydropyridine-2,6-dicarboxylate N-acetyltransferase (232 aa).

It belongs to the transferase hexapeptide repeat family. DapH subfamily.

It catalyses the reaction (S)-2,3,4,5-tetrahydrodipicolinate + acetyl-CoA + H2O = L-2-acetamido-6-oxoheptanedioate + CoA. The protein operates within amino-acid biosynthesis; L-lysine biosynthesis via DAP pathway; LL-2,6-diaminopimelate from (S)-tetrahydrodipicolinate (acetylase route): step 1/3. Its function is as follows. Catalyzes the transfer of an acetyl group from acetyl-CoA to tetrahydrodipicolinate. The chain is 2,3,4,5-tetrahydropyridine-2,6-dicarboxylate N-acetyltransferase from Streptococcus sanguinis (strain SK36).